The sequence spans 80 residues: MSDIEQRVKKIVAEQLGVAEADIKIESSFVDDLGADSLDTVELVMALEDEFEMEIPDEQAEKITTVQQAIDYAKAHVKAA.

Residues 2–77 enclose the Carrier domain; the sequence is SDIEQRVKKI…QAIDYAKAHV (76 aa). S37 is subject to O-(pantetheine 4'-phosphoryl)serine.

It belongs to the acyl carrier protein (ACP) family. In terms of processing, 4'-phosphopantetheine is transferred from CoA to a specific serine of apo-ACP by AcpS. This modification is essential for activity because fatty acids are bound in thioester linkage to the sulfhydryl of the prosthetic group.

It localises to the cytoplasm. The protein operates within lipid metabolism; fatty acid biosynthesis. Carrier of the growing fatty acid chain in fatty acid biosynthesis. The sequence is that of Acyl carrier protein from Herminiimonas arsenicoxydans.